Reading from the N-terminus, the 320-residue chain is Cytochrome f (320 aa).

A signal peptide spans 1-35 (MQTKNTFSWIKKEIIRSISVSLMIYIIARTSISNA). Residues Y36, C56, C59, and H60 each contribute to the heme site. The helical transmembrane segment at 286–306 (VQGLLFFLASVILAQIFLVLK) threads the bilayer.

This sequence belongs to the cytochrome f family. The 4 large subunits of the cytochrome b6-f complex are cytochrome b6, subunit IV (17 kDa polypeptide, petD), cytochrome f and the Rieske protein, while the 4 small subunits are PetG, PetL, PetM and PetN. The complex functions as a dimer. The cofactor is heme.

Its subcellular location is the plastid. It localises to the chloroplast thylakoid membrane. In terms of biological role, component of the cytochrome b6-f complex, which mediates electron transfer between photosystem II (PSII) and photosystem I (PSI), cyclic electron flow around PSI, and state transitions. The chain is Cytochrome f from Eucalyptus globulus subsp. globulus (Tasmanian blue gum).